Consider the following 501-residue polypeptide: Aspartyl/glutamyl-tRNA(Asn/Gln) amidotransferase subunit B (501 aa).

The protein belongs to the GatB/GatE family. GatB subfamily. As to quaternary structure, heterotrimer of A, B and C subunits.

The catalysed reaction is L-glutamyl-tRNA(Gln) + L-glutamine + ATP + H2O = L-glutaminyl-tRNA(Gln) + L-glutamate + ADP + phosphate + H(+). It carries out the reaction L-aspartyl-tRNA(Asn) + L-glutamine + ATP + H2O = L-asparaginyl-tRNA(Asn) + L-glutamate + ADP + phosphate + 2 H(+). In terms of biological role, allows the formation of correctly charged Asn-tRNA(Asn) or Gln-tRNA(Gln) through the transamidation of misacylated Asp-tRNA(Asn) or Glu-tRNA(Gln) in organisms which lack either or both of asparaginyl-tRNA or glutaminyl-tRNA synthetases. The reaction takes place in the presence of glutamine and ATP through an activated phospho-Asp-tRNA(Asn) or phospho-Glu-tRNA(Gln). The sequence is that of Aspartyl/glutamyl-tRNA(Asn/Gln) amidotransferase subunit B from Agrobacterium fabrum (strain C58 / ATCC 33970) (Agrobacterium tumefaciens (strain C58)).